The primary structure comprises 120 residues: Large ribosomal subunit protein uL18 (120 aa).

Belongs to the universal ribosomal protein uL18 family. In terms of assembly, part of the 50S ribosomal subunit; part of the 5S rRNA/L5/L18/L25 subcomplex. Contacts the 5S and 23S rRNAs.

This is one of the proteins that bind and probably mediate the attachment of the 5S RNA into the large ribosomal subunit, where it forms part of the central protuberance. This is Large ribosomal subunit protein uL18 from Nitrobacter hamburgensis (strain DSM 10229 / NCIMB 13809 / X14).